We begin with the raw amino-acid sequence, 137 residues long: Phosphoribosyl-AMP cyclohydrolase (137 aa).

Aspartate 84 provides a ligand contact to Mg(2+). Cysteine 85 lines the Zn(2+) pocket. The Mg(2+) site is built by aspartate 86 and aspartate 88. Residues cysteine 101 and cysteine 108 each coordinate Zn(2+).

This sequence belongs to the PRA-CH family. Homodimer. Mg(2+) serves as cofactor. It depends on Zn(2+) as a cofactor.

Its subcellular location is the cytoplasm. The enzyme catalyses 1-(5-phospho-beta-D-ribosyl)-5'-AMP + H2O = 1-(5-phospho-beta-D-ribosyl)-5-[(5-phospho-beta-D-ribosylamino)methylideneamino]imidazole-4-carboxamide. It functions in the pathway amino-acid biosynthesis; L-histidine biosynthesis; L-histidine from 5-phospho-alpha-D-ribose 1-diphosphate: step 3/9. Functionally, catalyzes the hydrolysis of the adenine ring of phosphoribosyl-AMP. The sequence is that of Phosphoribosyl-AMP cyclohydrolase from Chlorobium chlorochromatii (strain CaD3).